The following is a 781-amino-acid chain: Molybdenum cofactor sulfurase (781 aa).

Lysine 246 carries the post-translational modification N6-(pyridoxal phosphate)lysine. Residue cysteine 413 is part of the active site. Residues 635–781 enclose the MOSC domain; it reads LRLLRQSGQR…MTCGDVVLVE (147 aa). Serine 734 carries the post-translational modification Phosphoserine.

Belongs to the class-V pyridoxal-phosphate-dependent aminotransferase family. MOCOS subfamily. Requires pyridoxal 5'-phosphate as cofactor.

The catalysed reaction is Mo-molybdopterin + L-cysteine + AH2 = thio-Mo-molybdopterin + L-alanine + A + H2O. It functions in the pathway cofactor biosynthesis; molybdopterin biosynthesis. In terms of biological role, sulfurates the molybdenum cofactor. Sulfation of molybdenum is essential for xanthine dehydrogenase (XDH) and aldehyde oxidase (ADO) enzymes in which molybdenum cofactor is liganded by 1 oxygen and 1 sulfur atom in active form. This Drosophila melanogaster (Fruit fly) protein is Molybdenum cofactor sulfurase.